The chain runs to 269 residues: MPAAVPSWDPSQYLRHADHRARPFADLLARVPELPRDPARIADLGCGPGNVTRLIAERWPTARITGLDNSPEMLAKAAAYAGPTAGGGRLDFAAADARTWTPAQPYDLIVSNATLQWVPGHIDRLPAWTDGLAPGGTLAFQVPGNFDSPSHRLMRELAHSARWKDRLADTLRHDDAVHTPAAYLEALTALGCAADVWETTYLHLLQGEDPVLDWVKGTGLRPVLTELGAADAEAFVAEYREALREAYPATERGTVFPFRRVFAVAHKEA.

The protein belongs to the methyltransferase superfamily. Tam family.

It localises to the cytoplasm. The catalysed reaction is trans-aconitate + S-adenosyl-L-methionine = (E)-3-(methoxycarbonyl)pent-2-enedioate + S-adenosyl-L-homocysteine. Functionally, catalyzes the S-adenosylmethionine monomethyl esterification of trans-aconitate. The protein is Trans-aconitate 2-methyltransferase of Streptomyces avermitilis (strain ATCC 31267 / DSM 46492 / JCM 5070 / NBRC 14893 / NCIMB 12804 / NRRL 8165 / MA-4680).